Reading from the N-terminus, the 199-residue chain is Nucleoside triphosphate pyrophosphatase (199 aa).

The active-site Proton acceptor is D76.

This sequence belongs to the Maf family. It depends on a divalent metal cation as a cofactor.

The protein localises to the cytoplasm. The catalysed reaction is a ribonucleoside 5'-triphosphate + H2O = a ribonucleoside 5'-phosphate + diphosphate + H(+). The enzyme catalyses a 2'-deoxyribonucleoside 5'-triphosphate + H2O = a 2'-deoxyribonucleoside 5'-phosphate + diphosphate + H(+). Functionally, nucleoside triphosphate pyrophosphatase. May have a dual role in cell division arrest and in preventing the incorporation of modified nucleotides into cellular nucleic acids. In Caulobacter vibrioides (strain ATCC 19089 / CIP 103742 / CB 15) (Caulobacter crescentus), this protein is Nucleoside triphosphate pyrophosphatase.